The following is a 439-amino-acid chain: Glucose-1-phosphate adenylyltransferase (439 aa).

Alpha-D-glucose 1-phosphate contacts are provided by residues Gly-172, 187 to 188, and Ser-219; that span reads EK.

Belongs to the bacterial/plant glucose-1-phosphate adenylyltransferase family. In terms of assembly, homotetramer.

The catalysed reaction is alpha-D-glucose 1-phosphate + ATP + H(+) = ADP-alpha-D-glucose + diphosphate. The protein operates within glycan biosynthesis; glycogen biosynthesis. Involved in the biosynthesis of ADP-glucose, a building block required for the elongation reactions to produce glycogen. Catalyzes the reaction between ATP and alpha-D-glucose 1-phosphate (G1P) to produce pyrophosphate and ADP-Glc. This chain is Glucose-1-phosphate adenylyltransferase, found in Synechocystis sp. (strain ATCC 27184 / PCC 6803 / Kazusa).